We begin with the raw amino-acid sequence, 90 residues long: UPF0235 protein CPn_0497/CP_0257/CPj0497/CpB0517 (90 aa).

The protein belongs to the UPF0235 family.

The protein is UPF0235 protein CPn_0497/CP_0257/CPj0497/CpB0517 of Chlamydia pneumoniae (Chlamydophila pneumoniae).